Reading from the N-terminus, the 103-residue chain is Large ribosomal subunit protein bL21 (103 aa).

The protein belongs to the bacterial ribosomal protein bL21 family. In terms of assembly, part of the 50S ribosomal subunit. Contacts protein L20.

In terms of biological role, this protein binds to 23S rRNA in the presence of protein L20. In Heliobacterium modesticaldum (strain ATCC 51547 / Ice1), this protein is Large ribosomal subunit protein bL21.